The following is a 368-amino-acid chain: Ribosomal RNA large subunit methyltransferase M (368 aa).

Residues Ser-189, 222-225 (CPGG), Asp-241, Asp-261, and Asp-278 each bind S-adenosyl-L-methionine. Lys-307 serves as the catalytic Proton acceptor.

It belongs to the class I-like SAM-binding methyltransferase superfamily. RNA methyltransferase RlmE family. RlmM subfamily. Monomer.

It is found in the cytoplasm. The enzyme catalyses cytidine(2498) in 23S rRNA + S-adenosyl-L-methionine = 2'-O-methylcytidine(2498) in 23S rRNA + S-adenosyl-L-homocysteine + H(+). In terms of biological role, catalyzes the 2'-O-methylation at nucleotide C2498 in 23S rRNA. This is Ribosomal RNA large subunit methyltransferase M from Yersinia pseudotuberculosis serotype O:1b (strain IP 31758).